The sequence spans 190 residues: Signal peptidase complex subunit 3 (190 aa).

At 1–9 the chain is on the cytoplasmic side; the sequence is MFNIVTRFQ. The helical; Signal-anchor for type II membrane protein transmembrane segment at 10-32 threads the bilayer; sequence YAANQALTSSIIIAGIVIVSSLL. Topologically, residues 33–190 are lumenal; the sequence is QLYSNNAWSL…EYVDKKKEQK (158 aa).

Belongs to the SPCS3 family. In terms of assembly, component of the signal peptidase complex (SPC) composed of a catalytic subunit SEC11 and three accessory subunits SPC1, SPC2 and SPC3. The complex induces a local thinning of the ER membrane which is used to measure the length of the signal peptide (SP) h-region of protein substrates. This ensures the selectivity of the complex towards h-regions shorter than 18-20 amino acids. SPC associates with the translocon complex.

Its subcellular location is the endoplasmic reticulum membrane. Its function is as follows. Essential component of the signal peptidase complex (SPC) which catalyzes the cleavage of N-terminal signal sequences from nascent proteins as they are translocated into the lumen of the endoplasmic reticulum. Essential for the SPC catalytic activity, possibly by stabilizing and positioning the active center of the complex close to the lumenal surface. Essential for viability. The chain is Signal peptidase complex subunit 3 (SPC3) from Debaryomyces hansenii (strain ATCC 36239 / CBS 767 / BCRC 21394 / JCM 1990 / NBRC 0083 / IGC 2968) (Yeast).